Here is a 146-residue protein sequence, read N- to C-terminus: uncharacterized protein (146 aa).

Residues 6-26 (IPIFVISLSNISHIILAIFFF) traverse the membrane as a helical segment.

It localises to the membrane. This is an uncharacterized protein from Caenorhabditis elegans.